The following is a 1053-amino-acid chain: MNLSRILLLSMFFLSAMGQLPSQDIMALLEFKKGIKHDPTGFVLNSWNDESIDFNGCPSSWNGIVCNGGNVAGVVLDNLGLTADADFSLFSNLTKLVKLSMSNNSLSGVLPNDLGSFKSLQFLDLSDNLFSSSLPKEIGRSVSLRNLSLSGNNFSGEIPESMGGLISLQSLDMSSNSLSGPLPKSLTRLNDLLYLNLSSNGFTGKMPRGFELISSLEVLDLHGNSIDGNLDGEFFLLTNASYVDISGNRLVTTSGKLLPGVSESIKHLNLSHNQLEGSLTSGFQLFQNLKVLDLSYNMLSGELPGFNYVYDLEVLKLSNNRFSGSLPNNLLKGDSLLLTTLDLSGNNLSGPVSSIMSTTLHTLDLSSNSLTGELPLLTGGCVLLDLSNNQFEGNLTRWSKWENIEYLDLSQNHFTGSFPDATPQLLRANHLNLSYNKLTGSLPERIPTHYPKLRVLDISSNSLEGPIPGALLSMPTLEEIHLQNNGMTGNIGPLPSSGSRIRLLDLSHNRFDGDLPGVFGSLTNLQVLNLAANNLSGSLPSSMNDIVSLSSLDVSQNHFTGPLPSNLSSNIMAFNVSYNDLSGTVPENLKNFPPPSFYPGNSKLVLPAGSPGSSASEASKNKSTNKLVKVVIIVSCAVALIILILVAILLFCICKSRRREERSITGKETNRRAQTIPSGSGGGMVVSAEDLVASRKGSSSEILSPDEKLAVATGFSPSKTSNLSWSPGSGDSFPADQQLARLDVRSPDRLVGELHFLDDSIKLTPEELSRAPAEVLGRSSHGTSYRATLDNGVFLTVKWLREGVAKQRKEFAKEVKKFSNIRHPNVVTLRGYYWGPTQHEKLILSDYISPGSLASFLYDRPGRKGPPLAWTQRLKIAVDVARGLNYLHFDRAVPHGNLKATNILLDGAELNARVADYCLHRLMTQAGTVEQILDAGILGYRAPELAASRKPLPSFKSDVYAFGVILLEILTGRCAGDVITGEQEGVDLTDWVRLRVAEGRGAECFDSVLTQEMGSDPVTEKGMKEVLGIALRCIRSVSERPGIKTIYEDLSSI.

The signal sequence occupies residues 1–18; sequence MNLSRILLLSMFFLSAMG. Topologically, residues 19-630 are extracellular; the sequence is QLPSQDIMAL…NKSTNKLVKV (612 aa). 13 LRR repeats span residues 73–93, 94–119, 121–141, 142–165, 166–189, 191–212, 213–237, 239–260, 262–285, 286–309, 310–333, 335–357, and 358–384; these read GVVL…FSNL, TKLV…SFKS, QFLD…IGRS, VSLR…MGGL, ISLQ…LTRL, DLLY…GFEL, ISSL…FFLL, NASY…LLPG, SESI…GFQL, FQNL…FNYV, YDLE…LLKG, SLLL…SIMS, and TTLH…CVLL. Asn-92 carries an N-linked (GlcNAc...) asparagine glycan. Phosphoserine; by HT1 is present on residues Ser-100 and Ser-102. Asn-103 is a glycosylation site (N-linked (GlcNAc...) asparagine). Ser-105 and Ser-126 each carry phosphoserine; by HT1. Residues Asn-146 and Asn-153 are each glycosylated (N-linked (GlcNAc...) asparagine). Asn-196 carries an N-linked (GlcNAc...) asparagine glycan. The N-linked (GlcNAc...) asparagine glycan is linked to Asn-239. Ser-262 carries the phosphoserine; by HT1 modification. Asn-269 carries N-linked (GlcNAc...) asparagine glycosylation. Phosphoserine; by HT1 is present on Ser-278. Phosphothreonine; by HT1 is present on Thr-280. Ser-281 carries the post-translational modification Phosphoserine; by HT1. Ser-325 carries the phosphoserine; by HT1 modification. A glycan (N-linked (GlcNAc...) asparagine) is linked at Asn-347. Residue Asn-394 is glycosylated (N-linked (GlcNAc...) asparagine). LRR repeat units follow at residues 401–425, 426–449, 450–474, 476–498, 499–521, 522–546, 548–570, and 572–592; these read WENI…TPQL, LRAN…IPTH, YPKL…LLSM, TLEE…PSSG, SRIR…VFGS, LTNL…MNDI, SLSS…LSSN, and MAFN…LKNF. Position 406 is a phosphotyrosine; by HT1 (Tyr-406). Ser-410 is subject to Phosphoserine; by HT1. Residue Thr-415 is modified to Phosphothreonine; by HT1. Ser-417 bears the Phosphoserine; by HT1 mark. N-linked (GlcNAc...) asparagine glycosylation is present at Asn-432. Ser-434 bears the Phosphoserine; by HT1 mark. N-linked (GlcNAc...) asparagine glycans are attached at residues Asn-534, Asn-566, and Asn-575. Phosphoserine; by HT1 is present on residues Ser-613, Ser-614, and Ser-616. Asn-621 carries N-linked (GlcNAc...) asparagine glycosylation. Residues 631–651 traverse the membrane as a helical segment; the sequence is VIIVSCAVALIILILVAILLF. At 652 to 1053 the chain is on the cytoplasmic side; it reads CICKSRRREE…KTIYEDLSSI (402 aa). The segment covering 662-671 has biased composition (basic and acidic residues); it reads RSITGKETNR. The tract at residues 662-684 is disordered; that stretch reads RSITGKETNRRAQTIPSGSGGGM. Phosphothreonine; by HT1 is present on residues Thr-669 and Thr-675. Ser-678, Ser-680, Ser-698, Ser-699, and Ser-700 each carry phosphoserine; by HT1. Position 704 is a phosphoserine (Ser-704). Residue Thr-713 is modified to Phosphothreonine; by HT1. Phosphoserine; by HT1 is present on residues Ser-716 and Ser-718. Thr-720 bears the Phosphothreonine; by HT1 mark. 3 positions are modified to phosphoserine; by HT1: Ser-721, Ser-724, and Ser-760. Position 764 is a phosphothreonine; by HT1 (Thr-764). Ser-769 is modified (phosphoserine; by HT1). Positions 770 to 1053 constitute a Protein kinase domain; it reads RAPAEVLGRS…KTIYEDLSSI (284 aa). ATP-binding positions include 776–784 and Lys-798; that span reads LGRSSHGTS. Phosphothreonine; by HT1 is present on residues Thr-928 and Thr-1010. A Phosphoserine; by HT1 modification is found at Ser-1015. A Phosphothreonine; by HT1 modification is found at Thr-1045. At Tyr-1047 the chain carries Phosphotyrosine; by HT1. 2 positions are modified to phosphoserine; by HT1: Ser-1051 and Ser-1052.

This sequence belongs to the protein kinase superfamily. Ser/Thr protein kinase family. In terms of assembly, interacts with SLAC1 (via N-terminus). Binds to ABI2, but not ABI1. Interacts with CPK3. Phosphorylated by HT1; this phosphorylation is inhibited by MPK12 and MPK4. Expressed in guard cells and in the vasculature of roots and leaves.

It localises to the cell membrane. The enzyme catalyses L-seryl-[protein] + ATP = O-phospho-L-seryl-[protein] + ADP + H(+). It catalyses the reaction L-threonyl-[protein] + ATP = O-phospho-L-threonyl-[protein] + ADP + H(+). Its activity is regulated as follows. Negatively regulated by ABI2. Receptor kinase acting as an early component in abscisic acid (ABA) signaling. Required for darkness, ABA, high CO(2) and hydrogen peroxide (H(2)O(2)) induction of S-type anion currents in guard cells leading to stomatal closure, possibly via the phosphorylation and activation of the anion channel SLAC1 and as a scaffolding component. Seems to act in parallel with SRK2E/OST1 in the ABA signaling pathway which regulates stomatal movement. Binds ATP. Involved in the local and/or systemic stomatal responses (e.g. stomatal closure) to light stress. The chain is LRR receptor-like serine/threonine-protein kinase GHR1 from Arabidopsis thaliana (Mouse-ear cress).